Reading from the N-terminus, the 118-residue chain is Protein MGF 110-6L (118 aa).

Positions 1-18 are cleaved as a signal peptide; that stretch reads MLVIFLGILGLLASQVSS. N-linked (GlcNAc...) asparagine; by host glycosylation occurs at Asn96. A Prevents secretion from ER motif is present at residues 115–118; that stretch reads KDEL.

Belongs to the asfivirus MGF 110 family. Post-translationally, N-glycosylated.

Its subcellular location is the host endoplasmic reticulum lumen. Its function is as follows. Plays a role in virus cell tropism, and may be required for efficient virus replication in macrophages. The protein is Protein MGF 110-6L of African swine fever virus (strain Badajoz 1971 Vero-adapted) (Ba71V).